Consider the following 213-residue polypeptide: CDP-diacylglycerol--inositol 3-phosphatidyltransferase (213 aa).

The Cytoplasmic portion of the chain corresponds to 1–5; it reads MPDEN. A helical membrane pass occupies residues 6 to 26; that stretch reads IFLFVPNLIGYARIVFAIISF. Tyr-27 is a topological domain (lumenal). Residues 28-48 traverse the membrane as a helical segment; the sequence is FMPCCPLTASSFYLLSGLLDA. 2 residues coordinate Mg(2+): Asp-47 and Asp-50. The Cytoplasmic portion of the chain corresponds to 49–73; the sequence is FDGHAARALNQGTRFGAMLDMLTDR. Residues Gly-51, Arg-55, and Thr-61 each coordinate a CDP-1,2-diacyl-sn-glycerol. Mg(2+)-binding residues include Asp-68 and Asp-72. Asp-72 serves as the catalytic Proton acceptor. A helical membrane pass occupies residues 74 to 94; the sequence is CSTMCLLVNLALLYPGATLFF. A topological domain (lumenal) is located at residue Gln-95. Residues 96-116 form a helical membrane-spanning segment; that stretch reads ISMSLDVASHWLHLHSSVVRG. Topologically, residues 117-139 are cytoplasmic; it reads SESHKMIDLSGNPVLRIYYTSRP. A helical transmembrane segment spans residues 140–160; sequence ALFTLCAGNELFYCLLYLFHF. The Lumenal portion of the chain corresponds to 161-174; sequence SEGPLVGSVGLFRM. Residues 175 to 195 form a helical membrane-spanning segment; sequence GLWVTAPIALLKSLISVIHLI. Residues 196-213 lie on the Cytoplasmic side of the membrane; it reads TAARNMAALDAADRAKKK.

Belongs to the CDP-alcohol phosphatidyltransferase class-I family. Mn(2+) is required as a cofactor. Mg(2+) serves as cofactor. In terms of tissue distribution, detected in placenta (at protein level). Widely expressed. Higher expression in adult liver and skeletal muscle, slightly lower levels seen in pancreas, kidney, lung, placenta, brain, heart, leukocyte, colon, small intestine, ovary, testis, prostate, thymus and spleen. In fetus, expressed in kidney, liver, lung and brain.

The protein localises to the endoplasmic reticulum membrane. The protein resides in the cell membrane. It catalyses the reaction a CDP-1,2-diacyl-sn-glycerol + myo-inositol = a 1,2-diacyl-sn-glycero-3-phospho-(1D-myo-inositol) + CMP + H(+). Its activity is regulated as follows. Inhibited by PtdIns (product inhibition), phosphatidylinositol phosphate, and nucleoside di- and tri-phosphates. Functionally, catalyzes the biosynthesis of phosphatidylinositol (PtdIns) as well as PtdIns:inositol exchange reaction. May thus act to reduce an excessive cellular PtdIns content. The exchange activity is due to the reverse reaction of PtdIns synthase and is dependent on CMP, which is tightly bound to the enzyme. In Homo sapiens (Human), this protein is CDP-diacylglycerol--inositol 3-phosphatidyltransferase.